A 302-amino-acid chain; its full sequence is Merozoite surface protein 2 (302 aa).

Residues 1–20 (MKVIKTLSIINFFIFVTFNI) form the signal peptide. 2 N-linked (GlcNAc...) asparagine glycosylation sites follow: Asn-22 and Asn-36. Residues 44 to 228 (EESKPPTGAV…EQTESPELQS (185 aa)) are polymorphic region. The 1; partial repeat unit spans residues 55–60 (GSGAGA). The 8 X 8 AA tandem repeats of G-S-G-A-G-A-V-A stretch occupies residues 55-113 (GSGAGAGSGAGAVAGSGAGAVAGSGAGAVAGSGAGAVAGSGAGAVAGSGAGAVAGSGAG). A run of 6 repeats spans residues 61-68 (GSGAGAVA), 69-76 (GSGAGAVA), 77-84 (GSGAGAVA), 85-92 (GSGAGAVA), 93-100 (GSGAGAVA), and 101-108 (GSGAGAVA). The 8; partial repeat unit spans residues 109–113 (GSGAG). Positions 114-263 (NGANPGADAE…DSQKECTDGN (150 aa)) are disordered. Over residues 125–150 (SPSTPATTTTTTTTNDAEASTSTSSE) the composition is skewed to low complexity. Basic and acidic residues predominate over residues 151 to 167 (NRNHNNAETNPKGKGEV). 2 stretches are compositionally biased toward polar residues: residues 169 to 195 (KPNQANKETQNNSNVQQDSQTKSNVPR) and 202 to 230 (KSPTAQPEQAENSAPTAEQTESPELQSAP). N-linked (GlcNAc...) asparagine glycosylation occurs at Asn-179. Residue Asn-251 is glycosylated (N-linked (GlcNAc...) asparagine). Cys-259 and Cys-267 are oxidised to a cystine. Asn-275 and Asn-276 each carry an N-linked (GlcNAc...) asparagine glycan. Asn-276 is lipidated: GPI-anchor amidated asparagine. Positions 277–302 (SSNIASINKFVVLISATLVLSFAIFI) are cleaved as a propeptide — removed in mature form.

Its subcellular location is the cell membrane. In terms of biological role, may play a role in the merozoite attachment to the erythrocyte. In Plasmodium falciparum (isolate tak 9), this protein is Merozoite surface protein 2.